Reading from the N-terminus, the 342-residue chain is tRNA N6-adenosine threonylcarbamoyltransferase (342 aa).

The Fe cation site is built by histidine 120 and histidine 124. Residues 142-146 (VVSGG), aspartate 175, glycine 188, aspartate 192, and asparagine 281 contribute to the substrate site. Aspartate 310 contacts Fe cation.

Belongs to the KAE1 / TsaD family. The cofactor is Fe(2+).

It is found in the cytoplasm. It catalyses the reaction L-threonylcarbamoyladenylate + adenosine(37) in tRNA = N(6)-L-threonylcarbamoyladenosine(37) in tRNA + AMP + H(+). Required for the formation of a threonylcarbamoyl group on adenosine at position 37 (t(6)A37) in tRNAs that read codons beginning with adenine. Is involved in the transfer of the threonylcarbamoyl moiety of threonylcarbamoyl-AMP (TC-AMP) to the N6 group of A37, together with TsaE and TsaB. TsaD likely plays a direct catalytic role in this reaction. In Geobacillus kaustophilus (strain HTA426), this protein is tRNA N6-adenosine threonylcarbamoyltransferase.